The chain runs to 636 residues: Leucine-rich repeat and fibronectin type-III domain-containing protein 4 (636 aa).

Positions 1-16 are cleaved as a signal peptide; the sequence is MAPPLLLLLLASGAAA. Positions 17–48 constitute an LRRNT domain; it reads CPLPCVCQNLSESLSTLCAHRGLLFVPPNVDR. The Extracellular portion of the chain corresponds to 17 to 518; that stretch reads CPLPCVCQNL…LQAHVLGGTL (502 aa). Asn25 carries an N-linked (GlcNAc...) asparagine glycan. LRR repeat units follow at residues 49–70, 73–94, 97–118, 121–142, 146–169, 170–191, and 194–215; these read RTVE…DFRN, GLVD…SFGD, SLRS…SLRG, NLQH…AFDD, SLED…GSMP, ALHT…VFAQ, and QLSR…PLFS. The region spanning 234-280 is the LRRCT domain; that stretch reads NPLHCNCELLWLRRLARPDDLETCASPPTLAGRYFWAVPEGEFSCEP. The Ig-like domain maps to 281–367; the sequence is PLIARHTQRL…GEATARVELR (87 aa). The cysteines at positions 302 and 351 are disulfide-linked. N-linked (GlcNAc...) asparagine glycosylation occurs at Asn333. The Fibronectin type-III domain occupies 405–502; it reads SEPAVQVTEV…GCAHFSTLPA (98 aa). Residues 519 to 539 traverse the membrane as a helical segment; that stretch reads TVAVGGVLVAALLVFTVALLV. The Cytoplasmic segment spans residues 540–636; the sequence is RGRGAGNGRL…SAERLEESVV (97 aa). Residues 556 to 585 are disordered; it reads VQSQTNGGTSPMPKSHPPRSPPPRPQRSCS. Pro residues predominate over residues 569 to 580; sequence KSHPPRSPPPRP. A phosphoserine mark is found at Ser585 and Ser627. The PDZ-binding motif lies at 633 to 636; it reads ESVV.

It belongs to the LRFN family. As to quaternary structure, forms heteromeric complexes with LRFN1 and LRFN2. Can form heteromeric complexes with LRFN3 and LRFN5. Unable to form homophilic interactions across cell junctions. Interacts with DLG1, DLG2, DLG3 and DLG4. Post-translationally, glycosylated.

It localises to the membrane. Functionally, promotes neurite outgrowth in hippocampal neurons. May play a role in redistributing DLG4 to the cell periphery. In Rattus norvegicus (Rat), this protein is Leucine-rich repeat and fibronectin type-III domain-containing protein 4 (Lrfn4).